The sequence spans 179 residues: NAD(P)H-quinone oxidoreductase subunit I, chloroplastic (179 aa).

4Fe-4S ferredoxin-type domains lie at 55–84 and 95–124; these read GRIHFEFDKCIACEVCVRVCPIDLPVVDWR and LNYSIDFGICIFCGNCVEYCPTNCLSMTEE. Cysteine 64, cysteine 67, cysteine 70, cysteine 74, cysteine 104, cysteine 107, cysteine 110, and cysteine 114 together coordinate [4Fe-4S] cluster.

It belongs to the complex I 23 kDa subunit family. In terms of assembly, NDH is composed of at least 16 different subunits, 5 of which are encoded in the nucleus. [4Fe-4S] cluster serves as cofactor.

The protein resides in the plastid. It localises to the chloroplast thylakoid membrane. The catalysed reaction is a plastoquinone + NADH + (n+1) H(+)(in) = a plastoquinol + NAD(+) + n H(+)(out). It carries out the reaction a plastoquinone + NADPH + (n+1) H(+)(in) = a plastoquinol + NADP(+) + n H(+)(out). Functionally, NDH shuttles electrons from NAD(P)H:plastoquinone, via FMN and iron-sulfur (Fe-S) centers, to quinones in the photosynthetic chain and possibly in a chloroplast respiratory chain. The immediate electron acceptor for the enzyme in this species is believed to be plastoquinone. Couples the redox reaction to proton translocation, and thus conserves the redox energy in a proton gradient. This chain is NAD(P)H-quinone oxidoreductase subunit I, chloroplastic, found in Nymphaea alba (White water-lily).